Reading from the N-terminus, the 424-residue chain is UDP-N-acetylglucosamine 1-carboxyvinyltransferase (424 aa).

22–23 (KN) is a phosphoenolpyruvate binding site. R93 contacts UDP-N-acetyl-alpha-D-glucosamine. C117 serves as the catalytic Proton donor. C117 is modified (2-(S-cysteinyl)pyruvic acid O-phosphothioketal). UDP-N-acetyl-alpha-D-glucosamine-binding positions include 122–126 (RPVDL), D307, and I329.

This sequence belongs to the EPSP synthase family. MurA subfamily.

Its subcellular location is the cytoplasm. The catalysed reaction is phosphoenolpyruvate + UDP-N-acetyl-alpha-D-glucosamine = UDP-N-acetyl-3-O-(1-carboxyvinyl)-alpha-D-glucosamine + phosphate. Its pathway is cell wall biogenesis; peptidoglycan biosynthesis. Functionally, cell wall formation. Adds enolpyruvyl to UDP-N-acetylglucosamine. The chain is UDP-N-acetylglucosamine 1-carboxyvinyltransferase from Chlorobaculum parvum (strain DSM 263 / NCIMB 8327) (Chlorobium vibrioforme subsp. thiosulfatophilum).